The following is a 61-amino-acid chain: UPF0370 protein Spro_3503 (61 aa).

A helical membrane pass occupies residues 3 to 23 (WLADYWWIILLILVGMIISGI). Positions 38–48 (KPELPPHRDNN) are enriched in basic and acidic residues. The segment at 38–61 (KPELPPHRDNNAEWDDDDDWPKKK) is disordered. Residues 49–61 (AEWDDDDDWPKKK) are compositionally biased toward acidic residues.

The protein belongs to the UPF0370 family.

Its subcellular location is the cell membrane. The sequence is that of UPF0370 protein Spro_3503 from Serratia proteamaculans (strain 568).